The primary structure comprises 185 residues: Ribosome-recycling factor (185 aa).

The disordered stretch occupies residues 138-160; the sequence is AMDKAVKDGEVGEDEGARGEKEL.

Belongs to the RRF family.

The protein localises to the cytoplasm. In terms of biological role, responsible for the release of ribosomes from messenger RNA at the termination of protein biosynthesis. May increase the efficiency of translation by recycling ribosomes from one round of translation to another. The chain is Ribosome-recycling factor from Micrococcus luteus (strain ATCC 4698 / DSM 20030 / JCM 1464 / CCM 169 / CCUG 5858 / IAM 1056 / NBRC 3333 / NCIMB 9278 / NCTC 2665 / VKM Ac-2230) (Micrococcus lysodeikticus).